The chain runs to 305 residues: tRNA pseudouridine synthase B (305 aa).

The active-site Nucleophile is Asp48.

The protein belongs to the pseudouridine synthase TruB family. Type 1 subfamily.

The enzyme catalyses uridine(55) in tRNA = pseudouridine(55) in tRNA. In terms of biological role, responsible for synthesis of pseudouridine from uracil-55 in the psi GC loop of transfer RNAs. This chain is tRNA pseudouridine synthase B, found in Pseudomonas putida (strain GB-1).